The following is a 520-amino-acid chain: Amine oxidase [flavin-containing] B (520 aa).

Residue S2 is modified to N-acetylserine. Residues 2–489 (SSKCDVVVVG…TFLERHLPSV (488 aa)) lie on the Cytoplasmic side of the membrane. The residue at position 52 (K52) is an N6-acetyllysine. C397 carries the post-translational modification S-8alpha-FAD cysteine. The helical; Anchor for type IV membrane protein transmembrane segment at 490-516 (PGLLRLIGLTAIFSATALGYLAHKRGL) threads the bilayer. At 517 to 520 (LVRV) the chain is on the mitochondrial intermembrane side.

This sequence belongs to the flavin monoamine oxidase family. As to quaternary structure, monomer, homo- or heterodimer (containing two subunits of similar size). Each subunit contains a covalently bound flavin. Enzymatically active as monomer. FAD is required as a cofactor.

Its subcellular location is the mitochondrion outer membrane. It catalyses the reaction a secondary aliphatic amine + O2 + H2O = a primary amine + an aldehyde + H2O2. The catalysed reaction is (R)-adrenaline + O2 + H2O = (R)-3,4-dihydroxymandelaldehyde + methylamine + H2O2. It carries out the reaction a primary methyl amine + O2 + H2O = an aldehyde + H2O2 + NH4(+). The enzyme catalyses benzylamine + O2 + H2O = benzaldehyde + H2O2 + NH4(+). It catalyses the reaction dopamine + O2 + H2O = 3,4-dihydroxyphenylacetaldehyde + H2O2 + NH4(+). The catalysed reaction is tyramine + O2 + H2O = (4-hydroxyphenyl)acetaldehyde + H2O2 + NH4(+). It carries out the reaction (R)-noradrenaline + O2 + H2O = (R)-3,4-dihydroxymandelaldehyde + H2O2 + NH4(+). The enzyme catalyses 2-phenylethylamine + O2 + H2O = 2-phenylacetaldehyde + H2O2 + NH4(+). It catalyses the reaction N-acetylputrescine + O2 + H2O = 4-acetamidobutanal + H2O2 + NH4(+). Functionally, catalyzes the oxidative deamination of primary and some secondary amines such as neurotransmitters, and exogenous amines including the tertiary amine, neurotoxin 1-methyl-4-phenyl-1,2,3,6-tetrahydropyridine (MPTP), with concomitant reduction of oxygen to hydrogen peroxide and participates in the metabolism of neuroactive and vasoactive amines in the central nervous system and peripheral tissues. Preferentially degrades benzylamine and phenylethylamine. In Sus scrofa (Pig), this protein is Amine oxidase [flavin-containing] B.